A 656-amino-acid polypeptide reads, in one-letter code: Cyclic AMP-dependent transcription factor ATF-6 alpha (656 aa).

The tract at residues 1-137 (MESPFSPVLP…SPSSVEPLKE (137 aa)) is transcription activation. Over 1-377 (MESPFSPVLP…VMIVLAFIML (377 aa)) the chain is Cytoplasmic. Lysine 75 participates in a covalent cross-link: Glycyl lysine isopeptide (Lys-Gly) (interchain with G-Cter in SUMO2). Positions 75–169 (KAEPQPLSPA…MSSKPSVQPK (95 aa)) are disordered. 2 stretches are compositionally biased toward low complexity: residues 78-101 (PQPL…SCSS) and 111-121 (LLSSSQSPLSL). Lysine 139 participates in a covalent cross-link: Glycyl lysine isopeptide (Lys-Gly) (interchain with G-Cter in ubiquitin). The bZIP domain maps to 293 to 356 (VLRRQQRMIK…DEVVSENQRL (64 aa)). The segment at 295-326 (RRQQRMIKNRESACQSRKKKKEYMLGLEARLK) is basic motif. The segment at 335 to 342 (LKKENGSL) is leucine-zipper. A helical; Signal-anchor for type II membrane protein transmembrane segment spans residues 378–398 (NYGPMSMLEQESRRVKPSVSP). A disordered region spans residues 391-429 (RVKPSVSPANQRRHLLEFSAKEVKDTSDGDNQKDSYSYD). Over 399 to 656 (ANQRRHLLEF…VVSTIPESLQ (258 aa)) the chain is Lumenal. Residues 404 to 427 (HLLEFSAKEVKDTSDGDNQKDSYS) are compositionally biased toward basic and acidic residues. The interaction with THBS4 stretch occupies residues 455–575 (QPLINTTESL…ATTHNKTTRP (121 aa)). N-linked (GlcNAc...) asparagine glycans are attached at residues asparagine 459, asparagine 570, and asparagine 629. Residues 632–650 (STFFGSPPTTTETTHVVST) show a composition bias toward low complexity. The tract at residues 632 to 656 (STFFGSPPTTTETTHVVSTIPESLQ) is disordered.

It belongs to the bZIP family. ATF subfamily. Interacts with XBP1 isoform 2; the interaction occurs in a ER stress-dependent manner. Interacts with LACC1. In terms of assembly, interacts with THBS4 (via EGF-like 3; calcium-binding domain) which facilitates its processing, activation and nuclear translocation. Interacts (via lumenal domain) with THBS1. As to quaternary structure, homodimer and heterodimer with ATF6-beta. The dimer interacts with the nuclear transcription factor Y (NF-Y) trimer through direct binding to NF-Y subunit C (NF-YC). Also interacts with the transcription factors GTF2I, YY1 and SRF. During unfolded protein response, a fragment of approximately 50 kDa containing the cytoplasmic transcription factor domain is released by proteolysis. The cleavage seems to be performed sequentially by site-1 (MBTPS1, S1P) and site-2 (MBTPS2, S2P) proteases. Post-translationally, N-glycosylated; in its luminal domain. The glycosylation status may serve as a sensor for ER homeostasis, resulting in ATF6 activation to trigger the unfolded protein response (UPR). In terms of processing, ubiquitinated by RNF186 at Lys-139, which is required for pattern recognition receptor-induced unfolded protein response-associated outcomes.

The protein resides in the endoplasmic reticulum membrane. The protein localises to the golgi apparatus membrane. It is found in the nucleus. In terms of biological role, precursor of the transcription factor form (Processed cyclic AMP-dependent transcription factor ATF-6 alpha), which is embedded in the endoplasmic reticulum membrane. Endoplasmic reticulum stress promotes processing of this form, releasing the transcription factor form that translocates into the nucleus, where it activates transcription of genes involved in the unfolded protein response (UPR). Its function is as follows. Transcription factor that initiates the unfolded protein response (UPR) during endoplasmic reticulum stress by activating transcription of genes involved in the UPR. Binds DNA on the 5'-CCAC[GA]-3'half of the ER stress response element (ERSE) (5'-CCAAT-N(9)-CCAC[GA]-3') and of ERSE II (5'-ATTGG-N-CCACG-3'). Binding to ERSE requires binding of NF-Y to ERSE. Could also be involved in activation of transcription by the serum response factor. May play a role in foveal development and cone function in the retina. This is Cyclic AMP-dependent transcription factor ATF-6 alpha (Atf6) from Mus musculus (Mouse).